Consider the following 771-residue polypeptide: Protein lin-54 homolog (771 aa).

2 disordered regions span residues 21-44 (AMDEDPPASHLTPPPQSAPESAQV) and 68-105 (TNAKSTTSSTTQLLLTPSSSSSTTTKNATPTLPKIPSL). Positions 72-92 (STTSSTTQLLLTPSSSSSTTT) are enriched in low complexity. A phosphoserine mark is found at serine 288, serine 292, and serine 308. The CRC domain maps to 544–657 (PRKPCNCTRS…KCMGCKNFEE (114 aa)). The segment at 546–559 (KPCNCTRSQCLKLY) is DNA-binding. 9 residues coordinate Zn(2+): cysteine 548, cysteine 550, cysteine 555, cysteine 560, cysteine 562, cysteine 569, cysteine 572, cysteine 574, and cysteine 577. Positions 606–619 (IGKGKEGESDRRHS) are linker. Zn(2+) contacts are provided by cysteine 622, cysteine 624, cysteine 629, cysteine 634, cysteine 636, cysteine 643, cysteine 647, cysteine 649, and cysteine 652. Residues 622–635 (CNCKKSGCLKNYCE) form a DNA-binding region.

Belongs to the lin-54 family. As to quaternary structure, component of the DREAM complex.

It is found in the nucleus. Component of the DREAM complex, a multiprotein complex that can both act as a transcription activator or repressor depending on the context. Specifically recognizes the consensus motif 5'-TTYRAA-3' in target DNA. This Danio rerio (Zebrafish) protein is Protein lin-54 homolog (lin54).